Consider the following 386-residue polypeptide: MLFLVVFLHLYRFTFGPQHPAAHGVLCCLLYFCGEFIVYIDCIIGYLHRGTEKLCEYKSVEQCLPYFDRLDYVSVCCNEHLLSLCFEYMLRCCLSLRCAFMRLLIVEFTRSFNGLLCISCMVLDLGCLSPLLWSFEERDKLMTFFDLCCGCRMHLAFMVLLGILDDFVFGFVDFLLLLIISCLFVMDCYDLLFVGNRLFYLRLRGLSFFDLYDLVFNSLSGVLSRSLGMVWDCRLFSCYELYFMFCYDYCFCFIGDAFDRLFLRLFDMRMSLLICKQCFFVGFFVFGFVCLFDYLYCDITIETIIMLFYSLWCCCLPGISFACVEHPKGEYCLLLCFCVGLCSRLRLRCADFLHICLLDVCLRGFLLHDLVAVLGNIDVVFGSVDR.

Belongs to the complex I 49 kDa subunit family.

It is found in the mitochondrion. The catalysed reaction is a ubiquinone + NADH + 5 H(+)(in) = a ubiquinol + NAD(+) + 4 H(+)(out). In terms of biological role, core subunit of the mitochondrial membrane respiratory chain NADH dehydrogenase (Complex I) that is believed to belong to the minimal assembly required for catalysis. Complex I functions in the transfer of electrons from NADH to the respiratory chain. The immediate electron acceptor for the enzyme is believed to be ubiquinone. Component of the iron-sulfur (IP) fragment of the enzyme. Component of the iron-sulfur (IP) fragment of the enzyme. This is NADH-ubiquinone oxidoreductase 49 kDa subunit homolog (NAD7) from Trypanosoma brucei brucei.